Consider the following 114-residue polypeptide: Circadian clock oscillator protein KaiB (114 aa).

It belongs to the KaiB family. May undergo a major conformational rearrangment; in the free state forms homooligomers. When bound to KaiC switches to a monomeric thioredoxin-fold (KaiB(fs)). The active oscillator complex is probably KaiC(6):KaiB(6).

Its function is as follows. Component of the KaiBC clock protein complex, which constitutes the main circadian regulator in cyanobacteria; it may modify the ATPase activity of KaiC. Functionally, may be a metamorphic protein which reversibly switches between an inactive tetrameric fold and a rare, thioredoxin-like monomeric fold (KaiB(fs)). KaiB(fs) binds phospho-KaiC, and perhaps clock output effectors. The protein is Circadian clock oscillator protein KaiB of Prochlorococcus marinus (strain MIT 9211).